Reading from the N-terminus, the 295-residue chain is Ribosomal RNA small subunit methyltransferase A (295 aa).

Positions 29, 31, 56, 77, 102, and 128 each coordinate S-adenosyl-L-methionine.

The protein belongs to the class I-like SAM-binding methyltransferase superfamily. rRNA adenine N(6)-methyltransferase family. RsmA subfamily.

The protein resides in the cytoplasm. The enzyme catalyses adenosine(1518)/adenosine(1519) in 16S rRNA + 4 S-adenosyl-L-methionine = N(6)-dimethyladenosine(1518)/N(6)-dimethyladenosine(1519) in 16S rRNA + 4 S-adenosyl-L-homocysteine + 4 H(+). Functionally, specifically dimethylates two adjacent adenosines (A1518 and A1519) in the loop of a conserved hairpin near the 3'-end of 16S rRNA in the 30S particle. May play a critical role in biogenesis of 30S subunits. This is Ribosomal RNA small subunit methyltransferase A from Listeria welshimeri serovar 6b (strain ATCC 35897 / DSM 20650 / CCUG 15529 / CIP 8149 / NCTC 11857 / SLCC 5334 / V8).